Here is a 279-residue protein sequence, read N- to C-terminus: Ankyrin repeat domain-containing protein 7 (279 aa).

A compositionally biased stretch (basic residues) spans 1-11 (MKKFFPFRGKR). Residues 1–25 (MKKFFPFRGKRKTDDSHSHSSEVPI) form a disordered region. 5 ANK repeats span residues 80–109 (RSRTPLHLACANGYTNIVSLLIENQCKINV), 113–142 (ENRTPLIKAVECQQESCATVLLLHGADPNL), 146–175 (YSNTALHYAVCGQNISLANKLLQYKANLEA), 179–208 (DGHTPLLLAVAENNENMVKFLLKKGADVNA), and 212–241 (NHRTAIMIALIVEPTSSVKLLLQQDTDLAH).

This chain is Ankyrin repeat domain-containing protein 7 (Ankrd7), found in Mus musculus (Mouse).